A 624-amino-acid polypeptide reads, in one-letter code: DNA mismatch repair protein MutL (624 aa).

Residues 360 to 396 form a disordered region; sequence GGNHFSQPAPRRETASTEPAVARERAPQPAYHSGSGY. Residues 369-385 are compositionally biased toward basic and acidic residues; sequence PRRETASTEPAVARERA.

Belongs to the DNA mismatch repair MutL/HexB family.

This protein is involved in the repair of mismatches in DNA. It is required for dam-dependent methyl-directed DNA mismatch repair. May act as a 'molecular matchmaker', a protein that promotes the formation of a stable complex between two or more DNA-binding proteins in an ATP-dependent manner without itself being part of a final effector complex. This Serratia proteamaculans (strain 568) protein is DNA mismatch repair protein MutL.